Here is a 236-residue protein sequence, read N- to C-terminus: MGQKINPIGLRLGINRTWDSRWYANTGEYGKLLHEDVKIREFLTEELKQAAISKIVIERPHKKCRVTIHSARPGIIIGKKGADIEKLRKKLSEMTNADTSLNIVEVRKPEIDATLIAQSIAQQLERRVAFRRAMKRAVQSAMRLGAEGIRINCSGRLGGAEIARMEWYREGRVPLHTLRADIDYGTAEAKTAYGICGVKVWVFKGEILEHDPMASERRAVEGDNQGSSSNRRRENA.

The 69-residue stretch at 39–107 folds into the KH type-2 domain; the sequence is IREFLTEELK…DTSLNIVEVR (69 aa). The segment at 214–236 is disordered; sequence ASERRAVEGDNQGSSSNRRRENA.

Belongs to the universal ribosomal protein uS3 family. Part of the 30S ribosomal subunit. Forms a tight complex with proteins S10 and S14.

In terms of biological role, binds the lower part of the 30S subunit head. Binds mRNA in the 70S ribosome, positioning it for translation. This chain is Small ribosomal subunit protein uS3, found in Brucella anthropi (strain ATCC 49188 / DSM 6882 / CCUG 24695 / JCM 21032 / LMG 3331 / NBRC 15819 / NCTC 12168 / Alc 37) (Ochrobactrum anthropi).